We begin with the raw amino-acid sequence, 31 residues long: Photosystem II reaction center protein T (31 aa).

A helical membrane pass occupies residues 3 to 23; the sequence is SVAYILILTMALAVLFFAIAF.

It belongs to the PsbT family. As to quaternary structure, PSII is composed of 1 copy each of membrane proteins PsbA, PsbB, PsbC, PsbD, PsbE, PsbF, PsbH, PsbI, PsbJ, PsbK, PsbL, PsbM, PsbT, PsbX, PsbY, PsbZ, Psb30/Ycf12, peripheral proteins PsbO, CyanoQ (PsbQ), PsbU, PsbV and a large number of cofactors. It forms dimeric complexes.

Its subcellular location is the cellular thylakoid membrane. Functionally, found at the monomer-monomer interface of the photosystem II (PS II) dimer, plays a role in assembly and dimerization of PSII. PSII is a light-driven water plastoquinone oxidoreductase, using light energy to abstract electrons from H(2)O, generating a proton gradient subsequently used for ATP formation. The polypeptide is Photosystem II reaction center protein T (Gloeothece citriformis (strain PCC 7424) (Cyanothece sp. (strain PCC 7424))).